Here is a 73-residue protein sequence, read N- to C-terminus: MTNSLFKQKLSPIKPGDPIDYKDVELLKKFITDRGKILPRRLTGLTAKQQRDLTTAVKRARIIALLPFVNPEG.

It belongs to the bacterial ribosomal protein bS18 family. Part of the 30S ribosomal subunit. Forms a tight heterodimer with protein bS6.

Functionally, binds as a heterodimer with protein bS6 to the central domain of the 16S rRNA, where it helps stabilize the platform of the 30S subunit. The protein is Small ribosomal subunit protein bS18 of Prochlorococcus marinus (strain NATL2A).